We begin with the raw amino-acid sequence, 1047 residues long: FACT complex subunit SPT16 (1047 aa).

Ala2 is modified (N-acetylalanine). An N6-acetyllysine modification is found at Lys139. A Phosphoserine modification is found at Ser188. N6-acetyllysine occurs at positions 196 and 223. Residues 432 to 507 (LKNEDEEEEE…GEQQIQKARK (76 aa)) are a coiled coil. Position 455 is a phosphoserine (Ser455). The tract at residues 492-518 (RLTEQKGEQQIQKARKSNVSYKNPSLM) is disordered. A Glycyl lysine isopeptide (Lys-Gly) (interchain with G-Cter in SUMO2) cross-link involves residue Lys497. The span at 499-514 (EQQIQKARKSNVSYKN) shows a compositional bias: polar residues. Residue Ser508 is modified to Phosphoserine. Lys513 carries the post-translational modification N6-acetyllysine; alternate. Residue Lys513 forms a Glycyl lysine isopeptide (Lys-Gly) (interchain with G-Cter in SUMO2); alternate linkage. Lys647 participates in a covalent cross-link: Glycyl lysine isopeptide (Lys-Gly) (interchain with G-Cter in SUMO2). A phosphoserine mark is found at Ser650 and Ser658. Lys732 and Lys786 each carry N6-acetyllysine. Thr903 is subject to Phosphothreonine. N6-acetyllysine is present on Lys904. The tract at residues 918–1047 (EQGGWSFLEP…SSAPPKKKRK (130 aa)) is disordered. Over residues 927-973 (PEGEGSDAEEGDSESEIEDETFNPSEDDYEEEEEDSDEDYSSEAEES) the composition is skewed to acidic residues. Phosphoserine is present on residues Ser979, Ser982, Ser986, and Ser1015. A compositionally biased stretch (basic and acidic residues) spans 985–1005 (ESGKDWDELEEEARKADRESR). Residues 1024-1039 (VHSSGRGSNRGSRHSS) are compositionally biased toward low complexity.

This sequence belongs to the peptidase M24 family. SPT16 subfamily. As to quaternary structure, interacts with MYOG (via C-terminal region). Component of the FACT complex, a stable heterodimer of SSRP1 and SUPT16H. Also a component of a CK2-SPT16-SSRP1 complex which forms following UV irradiation, composed of SSRP1, SUPT16H, CSNK2A1, CSNK2A2 and CSNK2B. Interacts with NEK9. Binds to histone H2A-H2B. Identified in a centromere complex containing histones H2A, H2B and H4, and at least CENPA, CENPB, CENPC, CENPT, CENPN, HJURP, SUPT16H, SSRP1 and RSF1. Interacts with GTF2E2. (Microbial infection) Interacts with Herpes simplex virus 1 (HHV-1) protein ICP22; this interaction relocalizes the FACT complex to viral genomes in infected cells. ADP-ribosylated. ADP-ribosylation by PARP1 is induced by genotoxic stress and correlates with dissociation of FACT from chromatin. Ubiquitous.

It localises to the nucleus. Its subcellular location is the chromosome. Component of the FACT complex, a general chromatin factor that acts to reorganize nucleosomes. The FACT complex is involved in multiple processes that require DNA as a template such as mRNA elongation, DNA replication and DNA repair. During transcription elongation the FACT complex acts as a histone chaperone that both destabilizes and restores nucleosomal structure. It facilitates the passage of RNA polymerase II and transcription by promoting the dissociation of one histone H2A-H2B dimer from the nucleosome, then subsequently promotes the reestablishment of the nucleosome following the passage of RNA polymerase II. The FACT complex is probably also involved in phosphorylation of 'Ser-392' of p53/TP53 via its association with CK2 (casein kinase II). This Homo sapiens (Human) protein is FACT complex subunit SPT16 (SUPT16H).